A 307-amino-acid chain; its full sequence is 2-haloacid dehalogenase, configuration-inverting (307 aa).

It belongs to the HAD-like hydrolase superfamily. S-2-haloalkanoic acid dehalogenase family. Homodimer.

The catalysed reaction is an (S)-2-haloacid + H2O = a (2R)-2-hydroxycarboxylate + a halide anion + H(+). It catalyses the reaction an (R)-2-haloacid + H2O = a (2S)-2-hydroxycarboxylate + a halide anion + H(+). In terms of biological role, dehalogenates both (S)- and (R)-2-haloalkanoic acids to the corresponding (R)- and (S)-hydroxyalkanoic acids, respectively, with inversion of configuration at C-2. Acts on 2-haloalkanoic acids whose carbon chain lengths are five or less. The chain is 2-haloacid dehalogenase, configuration-inverting from Pseudomonas sp. (strain 113).